The sequence spans 504 residues: Mitochondrial-processing peptidase subunit alpha (504 aa).

Belongs to the peptidase M16 family. Heterodimer of alpha and beta subunits, forming the mitochondrial processing protease (MPP) in which subunit alpha is involved in substrate recognition and binding and subunit beta is the catalytic subunit.

It localises to the mitochondrion inner membrane. It catalyses the reaction a quinol + 2 Fe(III)-[cytochrome c](out) = a quinone + 2 Fe(II)-[cytochrome c](out) + 2 H(+)(out). Substrate recognition and binding subunit of the essential mitochondrial processing protease (MPP), which cleaves the mitochondrial sequence off newly imported precursors proteins. Functionally, this is a component of the ubiquinol-cytochrome c reductase complex (complex III or cytochrome b-c1 complex), which is part of the mitochondrial respiratory chain. Mediates formation of the complex between cytochromes c and c1. The chain is Mitochondrial-processing peptidase subunit alpha (MPP) from Solanum tuberosum (Potato).